A 313-amino-acid polypeptide reads, in one-letter code: Formate-nitrite transporter (313 aa).

The Cytoplasmic portion of the chain corresponds to 1 to 46 (MTKGSKYTIDPISVKTACTSEESYIRCVEYGKGKAHYPNLSLLAKA). The helical transmembrane segment at 47-67 (ILAGVFVGVCAHASGIAGGHF) threads the bilayer. Over 68–77 (YYHKLREHVG) the chain is Extracellular. A helical transmembrane segment spans residues 78–98 (ISMSAFVYGFTFPIAFLCIIA). Over 99 to 127 (TGSDLFTGNTLAVTTALLQRKVTLLEYLR) the chain is Cytoplasmic. The chain crosses the membrane as a helical span at residues 128 to 148 (VMSISLFGNYVGAVSFAFFVS). Residues 149 to 184 (HLSGAFKKHEEIGKNHIFQFLNDIAEKKVSHTFVQC) are Extracellular-facing. Residues 185-205 (VCLAIGCNIFVCLAVYFVLTI) traverse the membrane as a helical segment. Residues 206–210 (KDGSG) are Cytoplasmic-facing. A helical transmembrane segment spans residues 211 to 231 (MVFSVFFAVYAFAIAGYEHII). At 232–256 (ANMYTLNLALMIEANVDWTKVYVDN) the chain is on the extracellular side. The chain crosses the membrane as a helical span at residues 257 to 277 (LLPTLIGNYIAGAIVLACPLF). At 278–313 (YIYRHSYSDYEKTRGDGGNSGLKSLSIEMQNGSSGR) the chain is on the cytoplasmic side. Residues 290 to 313 (TRGDGGNSGLKSLSIEMQNGSSGR) are disordered. The span at 298 to 313 (GLKSLSIEMQNGSSGR) shows a compositional bias: polar residues.

It belongs to the FNT transporter (TC 1.A.16) family. In terms of assembly, homopentamer.

The protein resides in the cell membrane. Its subcellular location is the vacuole membrane. It catalyses the reaction (S)-lactate(in) + H(+)(in) = (S)-lactate(out) + H(+)(out). The enzyme catalyses formate(in) + H(+)(in) = formate(out) + H(+)(out). It carries out the reaction pyruvate(out) + H(+)(out) = pyruvate(in) + H(+)(in). The catalysed reaction is acetate(out) + H(+)(out) = acetate(in) + H(+)(in). Inhibited by the Malaria Box compound MMV007839 and its derivatives BH296 and BH267.meta. In terms of biological role, monocarboxylate-proton symporter that mediates the efflux of the waste product lactate in the intraerythrocytic parasites; active in acidic-to-neutral pH range. Transports L-lactate. This is Formate-nitrite transporter from Plasmodium vivax.